The sequence spans 710 residues: NAD(P)H-quinone oxidoreductase subunit 5, chloroplastic (710 aa).

A run of 17 helical transmembrane segments spans residues 9 to 29 (WIIP…LLIF), 40 to 60 (WSFQ…YLSI), 89 to 109 (IDPL…LVLI), 125 to 145 (FTYM…SNFI), 147 to 167 (IYIF…FWFT), 185 to 205 (GDFG…SFEF), 221 to 241 (VNLL…IAKS), 258 to 278 (TPIS…FLVA), 280 to 300 (LLPL…IGII), 327 to 347 (LGYM…FHLI), 354 to 374 (ALLF…IGYS), 396 to 416 (GAFL…CFWS), 425 to 445 (WLYS…TAFY), 519 to 539 (MLFP…LGIP), 571 to 591 (FLKH…IAFL), 657 to 676 (SFDL…LSFI), and 689 to 709 (IPFY…LFYK).

This sequence belongs to the complex I subunit 5 family. As to quaternary structure, NDH is composed of at least 16 different subunits, 5 of which are encoded in the nucleus.

The protein localises to the plastid. The protein resides in the chloroplast thylakoid membrane. The enzyme catalyses a plastoquinone + NADH + (n+1) H(+)(in) = a plastoquinol + NAD(+) + n H(+)(out). It carries out the reaction a plastoquinone + NADPH + (n+1) H(+)(in) = a plastoquinol + NADP(+) + n H(+)(out). Functionally, NDH shuttles electrons from NAD(P)H:plastoquinone, via FMN and iron-sulfur (Fe-S) centers, to quinones in the photosynthetic chain and possibly in a chloroplast respiratory chain. The immediate electron acceptor for the enzyme in this species is believed to be plastoquinone. Couples the redox reaction to proton translocation, and thus conserves the redox energy in a proton gradient. The chain is NAD(P)H-quinone oxidoreductase subunit 5, chloroplastic (ndhF) from Ipomoea purpurea (Common morning glory).